Here is a 640-residue protein sequence, read N- to C-terminus: 1-deoxy-D-xylulose-5-phosphate synthase (640 aa).

Thiamine diphosphate-binding positions include histidine 77 and 118 to 120 (AHA). Aspartate 149 provides a ligand contact to Mg(2+). Thiamine diphosphate-binding positions include 150 to 151 (GS), asparagine 178, tyrosine 287, and glutamate 369. Residue asparagine 178 participates in Mg(2+) binding.

Belongs to the transketolase family. DXPS subfamily. Homodimer. It depends on Mg(2+) as a cofactor. Thiamine diphosphate serves as cofactor.

The catalysed reaction is D-glyceraldehyde 3-phosphate + pyruvate + H(+) = 1-deoxy-D-xylulose 5-phosphate + CO2. It participates in metabolic intermediate biosynthesis; 1-deoxy-D-xylulose 5-phosphate biosynthesis; 1-deoxy-D-xylulose 5-phosphate from D-glyceraldehyde 3-phosphate and pyruvate: step 1/1. Functionally, catalyzes the acyloin condensation reaction between C atoms 2 and 3 of pyruvate and glyceraldehyde 3-phosphate to yield 1-deoxy-D-xylulose-5-phosphate (DXP). The chain is 1-deoxy-D-xylulose-5-phosphate synthase from Caulobacter vibrioides (strain NA1000 / CB15N) (Caulobacter crescentus).